The sequence spans 364 residues: Putative protein C31H2.4 (364 aa).

2 VOC domains span residues 6–134 (AIHH…LGEF) and 161–320 (LMDH…IFSK). The Fe cation site is built by His-164, His-248, and Glu-331.

This sequence belongs to the 4HPPD family. Fe cation serves as cofactor.

This is Putative protein C31H2.4 from Caenorhabditis elegans.